A 150-amino-acid polypeptide reads, in one-letter code: Small ribosomal subunit protein bS6 (150 aa).

The interval 92-150 (KGINKPAKPKKTFKKTFVARKFSRDDESKTHSTEEPRRANTKSTYKKSTSFSQDNKNKK) is disordered. The segment covering 98-109 (AKPKKTFKKTFV) has biased composition (basic residues). Residues 113–129 (FSRDDESKTHSTEEPRR) show a composition bias toward basic and acidic residues. Residues 132 to 141 (TKSTYKKSTS) show a composition bias toward low complexity.

Belongs to the bacterial ribosomal protein bS6 family.

Functionally, binds together with bS18 to 16S ribosomal RNA. The protein is Small ribosomal subunit protein bS6 of Mycoplasmopsis pulmonis (strain UAB CTIP) (Mycoplasma pulmonis).